Here is a 587-residue protein sequence, read N- to C-terminus: ATP-dependent lipid A-core flippase (587 aa).

The next 5 helical transmembrane spans lie at 31–51, 68–88, 145–165, 169–189, and 259–279; these read LIASGIALVFNALADSGLIYL, LKIMAFVVVGMIILRGVTNFI, GSLITIVREGAYIISLLAVMF, WELTLVLFVIGPIIAVLITIV, and VQIIASLALVAVLFLATTPLI. Positions 32 to 315 constitute an ABC transmembrane type-1 domain; it reads IASGIALVFN…LTNVNSQFQR (284 aa). Positions 347–583 constitute an ABC transporter domain; the sequence is LEFKNVSFAY…NGAYKQLYSM (237 aa). 381-388 is a binding site for ATP; it reads GRSGSGKS.

The protein belongs to the ABC transporter superfamily. Lipid exporter (TC 3.A.1.106) family. Homodimer.

The protein resides in the cell inner membrane. It carries out the reaction ATP + H2O + lipid A-core oligosaccharideSide 1 = ADP + phosphate + lipid A-core oligosaccharideSide 2.. Involved in lipopolysaccharide (LPS) biosynthesis. Translocates lipid A-core from the inner to the outer leaflet of the inner membrane. Transmembrane domains (TMD) form a pore in the inner membrane and the ATP-binding domain (NBD) is responsible for energy generation. The chain is ATP-dependent lipid A-core flippase from Haemophilus influenzae (strain 86-028NP).